The primary structure comprises 475 residues: 3-hydroxyacyl-CoA dehydrogenase-like protein LAM1 (475 aa).

99-104 lines the NAD(+) pocket; sequence GTRPFA. Lys149 contributes to the CoA binding site. Asn245 is an NAD(+) binding site.

It belongs to the 3-hydroxyacyl-CoA dehydrogenase family.

Its pathway is mycotoxin biosynthesis. In terms of biological role, 3-hydroxyacyl-CoA dehydrogenase-like protein; part of the Tox1A locus, one of the 2 loci that mediate the biosynthesis of T-toxin, a family of linear polyketides 37 to 45 carbons in length, of which the major component is 41 carbons, and which leads to high virulence to maize. One of the PKSs (PKS1 or PKS2) could synthesize a precursor, used subsequently by the other PKS as starter unit, to add additional carbons. Variability in the length of the final carbon backbone C35-47 could be achieved by varying the number of condensation cycles, or use of different starter or extender units or might be due to decarboxylation of the penultimate product, catalyzed by DEC1. Additional proteins are required for the biosynthesis of T-toxin, including oxidoreductases RED1, RED2, RED3, LAM1 and OXI1, as well as esterase TOX9. The sequence is that of 3-hydroxyacyl-CoA dehydrogenase-like protein LAM1 from Cochliobolus heterostrophus (strain C4 / ATCC 48331 / race T) (Southern corn leaf blight fungus).